Here is a 241-residue protein sequence, read N- to C-terminus: MFDSFLNKLHQGIHQRGGQPAAVPEGLEHCHSSKSGGSIDSWLWSVPGFRRWRVTRLDAGESLQVLNSVAYPDHSLDHPLMGVDLLWFGARQKLVAVLDFQPLIQDQDYLDRHFQGLKALHERFPELNGEETMRSFDPNQYFSPWLLFCRGGAQEAEESLPAAFDAFLTAYWAMHDQALDVEAAGTSASTLSINDVERLQEAYDVYSAERDPAHGLFTSHFGKDWSDRFLHEFLFPASQST.

A disordered region spans residues 16-35 (RGGQPAAVPEGLEHCHSSKS).

Belongs to the HY2 family.

The enzyme catalyses 15,16-dihydrobiliverdin + oxidized 2[4Fe-4S]-[ferredoxin] = biliverdin IXalpha + reduced 2[4Fe-4S]-[ferredoxin] + 2 H(+). In terms of biological role, catalyzes the two-electron reduction of biliverdin IX-alpha at the C15 methine bridge. The sequence is that of 15,16-dihydrobiliverdin:ferredoxin oxidoreductase from Synechococcus sp. (strain WH7803).